Reading from the N-terminus, the 122-residue chain is Large ribosomal subunit protein bL12 (122 aa).

Positions 96-122 (APKSLKTGLSKDEANEMKKKLEDAGAT) are disordered. The segment covering 104–122 (LSKDEANEMKKKLEDAGAT) has biased composition (basic and acidic residues).

Belongs to the bacterial ribosomal protein bL12 family. Homodimer. Part of the ribosomal stalk of the 50S ribosomal subunit. Forms a multimeric L10(L12)X complex, where L10 forms an elongated spine to which 2 to 4 L12 dimers bind in a sequential fashion. Binds GTP-bound translation factors.

In terms of biological role, forms part of the ribosomal stalk which helps the ribosome interact with GTP-bound translation factors. Is thus essential for accurate translation. The chain is Large ribosomal subunit protein bL12 from Liberibacter asiaticus (Citrus greening disease).